The chain runs to 153 residues: Ribosomal RNA large subunit methyltransferase H (153 aa).

Residues I75, G103, and 121 to 126 (LSAMTF) contribute to the S-adenosyl-L-methionine site.

The protein belongs to the RNA methyltransferase RlmH family. In terms of assembly, homodimer.

Its subcellular location is the cytoplasm. It carries out the reaction pseudouridine(1915) in 23S rRNA + S-adenosyl-L-methionine = N(3)-methylpseudouridine(1915) in 23S rRNA + S-adenosyl-L-homocysteine + H(+). Specifically methylates the pseudouridine at position 1915 (m3Psi1915) in 23S rRNA. In Helicobacter hepaticus (strain ATCC 51449 / 3B1), this protein is Ribosomal RNA large subunit methyltransferase H.